The following is a 316-amino-acid chain: Ribosomal RNA small subunit methyltransferase H (316 aa).

Residues 35–37, Asp55, Phe84, Asp105, and Gln112 contribute to the S-adenosyl-L-methionine site; that span reads AGH.

It belongs to the methyltransferase superfamily. RsmH family.

The protein resides in the cytoplasm. It catalyses the reaction cytidine(1402) in 16S rRNA + S-adenosyl-L-methionine = N(4)-methylcytidine(1402) in 16S rRNA + S-adenosyl-L-homocysteine + H(+). Functionally, specifically methylates the N4 position of cytidine in position 1402 (C1402) of 16S rRNA. The protein is Ribosomal RNA small subunit methyltransferase H of Streptococcus thermophilus (strain ATCC BAA-250 / LMG 18311).